The primary structure comprises 274 residues: Transmembrane protein 106B (274 aa).

Residues 1-11 are compositionally biased toward low complexity; sequence MGKSLSHLPLH. The interval 1-20 is disordered; sequence MGKSLSHLPLHSSKEDAYDG. The N-myristoyl glycine moiety is linked to residue Gly-2. Over 2–96 the chain is Cytoplasmic; that stretch reads GKSLSHLPLH…QRLRPRRTKL (95 aa). Ser-33 is modified (phosphoserine). Residues 97–117 traverse the membrane as a helical segment; the sequence is YVMASVFVCLLLSGLAVFFLF. Over 118–274 the chain is Lumenal; sequence PRSIDVKYIG…EYLNVLQPQQ (157 aa). 4 N-linked (GlcNAc...) asparagine glycosylation sites follow: Asn-145, Asn-151, Asn-164, and Asn-183. Cys-214 and Cys-253 form a disulfide bridge. Asn-256 is a glycosylation site (N-linked (GlcNAc...) asparagine).

This sequence belongs to the TMEM106 family. As to quaternary structure, can form homomers. Interacts (via N-terminus) with MAP6 (via C-terminus). Interacts (via C-terminus) with the vacuolar-type ATPase subunit ATP6AP1. Interacts (via N-terminus) with AP2M1 and CLTC. Interacts with TMEM106C. (Microbial infection) Interacts with SARS coronavirus-2/SARS-CoV-2 spike protein (via RBD domain). As to expression, expressed in the brain, including in the frontal cortex (at protein level). Expressed in lung epithelial cells.

The protein localises to the late endosome membrane. Its subcellular location is the lysosome membrane. It is found in the cell membrane. In neurons, involved in the transport of late endosomes/lysosomes. May be involved in dendrite morphogenesis and maintenance by regulating lysosomal trafficking. May act as a molecular brake for retrograde transport of late endosomes/lysosomes, possibly via its interaction with MAP6. In motoneurons, may mediate the axonal transport of lysosomes and axonal sorting at the initial segment. It remains unclear whether TMEM106B affects the transport of moving lysosomes in the anterograde or retrograde direction in neurites and whether it is important in the sorting of lysosomes in axons or in dendrites. In neurons, may also play a role in the regulation of lysosomal size and responsiveness to stress. Required for proper lysosomal acidification. Functionally, (Microbial infection) Plays a role in human coronavirus SARS-CoV-2 infection, but not in common cold coronaviruses HCoV-229E and HCoV-OC43 infections. Involved in ACE2-independent SARS-CoV-2 cell entry. Required for post-endocytic stage of virus entry, facilitates spike-mediated membrane fusion. Virus attachment and endocytosis can also be mediated by other cell surface receptors. This chain is Transmembrane protein 106B, found in Homo sapiens (Human).